A 267-amino-acid chain; its full sequence is Tryptophan synthase alpha chain (267 aa).

Catalysis depends on proton acceptor residues glutamate 47 and aspartate 58.

The protein belongs to the TrpA family. In terms of assembly, tetramer of two alpha and two beta chains.

The enzyme catalyses (1S,2R)-1-C-(indol-3-yl)glycerol 3-phosphate + L-serine = D-glyceraldehyde 3-phosphate + L-tryptophan + H2O. It participates in amino-acid biosynthesis; L-tryptophan biosynthesis; L-tryptophan from chorismate: step 5/5. The alpha subunit is responsible for the aldol cleavage of indoleglycerol phosphate to indole and glyceraldehyde 3-phosphate. This chain is Tryptophan synthase alpha chain, found in Chlorobium phaeovibrioides (strain DSM 265 / 1930) (Prosthecochloris vibrioformis (strain DSM 265)).